The following is a 616-amino-acid chain: Dihydroxy-acid dehydratase (616 aa).

Mg(2+) is bound at residue D81. C122 contacts [2Fe-2S] cluster. Mg(2+) is bound by residues D123 and K124. K124 is modified (N6-carboxylysine). C195 is a [2Fe-2S] cluster binding site. Mg(2+) is bound at residue E491. S517 functions as the Proton acceptor in the catalytic mechanism.

The protein belongs to the IlvD/Edd family. In terms of assembly, homodimer. [2Fe-2S] cluster is required as a cofactor. The cofactor is Mg(2+).

It catalyses the reaction (2R)-2,3-dihydroxy-3-methylbutanoate = 3-methyl-2-oxobutanoate + H2O. It carries out the reaction (2R,3R)-2,3-dihydroxy-3-methylpentanoate = (S)-3-methyl-2-oxopentanoate + H2O. It participates in amino-acid biosynthesis; L-isoleucine biosynthesis; L-isoleucine from 2-oxobutanoate: step 3/4. It functions in the pathway amino-acid biosynthesis; L-valine biosynthesis; L-valine from pyruvate: step 3/4. In terms of biological role, functions in the biosynthesis of branched-chain amino acids. Catalyzes the dehydration of (2R,3R)-2,3-dihydroxy-3-methylpentanoate (2,3-dihydroxy-3-methylvalerate) into 2-oxo-3-methylpentanoate (2-oxo-3-methylvalerate) and of (2R)-2,3-dihydroxy-3-methylbutanoate (2,3-dihydroxyisovalerate) into 2-oxo-3-methylbutanoate (2-oxoisovalerate), the penultimate precursor to L-isoleucine and L-valine, respectively. The chain is Dihydroxy-acid dehydratase from Escherichia coli O7:K1 (strain IAI39 / ExPEC).